A 247-amino-acid polypeptide reads, in one-letter code: tRNA pseudouridine synthase A (247 aa).

D53 functions as the Nucleophile in the catalytic mechanism. Y112 is a substrate binding site.

This sequence belongs to the tRNA pseudouridine synthase TruA family. In terms of assembly, homodimer.

The enzyme catalyses uridine(38/39/40) in tRNA = pseudouridine(38/39/40) in tRNA. Functionally, formation of pseudouridine at positions 38, 39 and 40 in the anticodon stem and loop of transfer RNAs. This Anaplasma marginale (strain St. Maries) protein is tRNA pseudouridine synthase A.